We begin with the raw amino-acid sequence, 150 residues long: Transcriptional repressor NrdR (150 aa).

A zinc finger lies at 3 to 34 (CPFCGYEDTFVIDTREIEDQKVIRRRRECPNC). The ATP-cone domain occupies 49 to 139 (IMVIKKDGRR…VYQEFSSLEE (91 aa)).

Belongs to the NrdR family. Zn(2+) serves as cofactor.

In terms of biological role, negatively regulates transcription of bacterial ribonucleotide reductase nrd genes and operons by binding to NrdR-boxes. This chain is Transcriptional repressor NrdR, found in Dictyoglomus turgidum (strain DSM 6724 / Z-1310).